The sequence spans 592 residues: V-type ATP synthase alpha chain (592 aa).

An ATP-binding site is contributed by 233 to 240; it reads GPFGSGKT.

Belongs to the ATPase alpha/beta chains family.

It catalyses the reaction ATP + H2O + 4 H(+)(in) = ADP + phosphate + 5 H(+)(out). Its function is as follows. Produces ATP from ADP in the presence of a proton gradient across the membrane. The V-type alpha chain is a catalytic subunit. This is V-type ATP synthase alpha chain from Clostridium botulinum (strain Okra / Type B1).